A 201-amino-acid chain; its full sequence is 3-isopropylmalate dehydratase small subunit (201 aa).

Belongs to the LeuD family. LeuD type 1 subfamily. In terms of assembly, heterodimer of LeuC and LeuD.

It catalyses the reaction (2R,3S)-3-isopropylmalate = (2S)-2-isopropylmalate. It functions in the pathway amino-acid biosynthesis; L-leucine biosynthesis; L-leucine from 3-methyl-2-oxobutanoate: step 2/4. In terms of biological role, catalyzes the isomerization between 2-isopropylmalate and 3-isopropylmalate, via the formation of 2-isopropylmaleate. The protein is 3-isopropylmalate dehydratase small subunit of Sinorhizobium medicae (strain WSM419) (Ensifer medicae).